The sequence spans 1450 residues: DNA-directed RNA polymerase RPB1 homolog (1450 aa).

The protein belongs to the RNA polymerase beta' chain family. In terms of assembly, part of the viral DNA-directed RNA polymerase that consists of 8 polII-like subunits (RPB1, RPB2, RPB3, RPB5, RPB6, RPB7, RPB9, RPB10), a capping enzyme and a termination factor.

It is found in the virion. The catalysed reaction is RNA(n) + a ribonucleoside 5'-triphosphate = RNA(n+1) + diphosphate. Catalytic component of the DNA-directed RNA polymerase (RNAP) that catalyzes the transcription in the cytoplasm of viral DNA into RNA using the four ribonucleoside triphosphates as substrates. Forms the polymerase active center together with RPB2. Part of the core element with the central large cleft, the clamp element that moves to open and close the cleft and the jaws that are thought to grab the incoming DNA template. In African swine fever virus (isolate Warthog/Namibia/Wart80/1980) (ASFV), this protein is DNA-directed RNA polymerase RPB1 homolog.